The sequence spans 224 residues: UPF0758 protein XF_0148 (224 aa).

Residues 102 to 224 form the MPN domain; the sequence is SIHDPISAGR…PVSFAEHGWL (123 aa). His173, His175, and Asp186 together coordinate Zn(2+). The short motif at 173–186 is the JAMM motif element; the sequence is HNHPSGNREPSPAD.

The protein belongs to the UPF0758 family.

This is UPF0758 protein XF_0148 from Xylella fastidiosa (strain 9a5c).